A 129-amino-acid chain; its full sequence is MSNVPAELKYSKEHEWLRKEADGTYTVGITEHAQELLGDMVFVDLPEVGATVSAGDDCAVAESVKAASDIYAPVSGEIVAVNDALSDSPELVNSEPYADGWIFKIKASNESELESLLDATAYEALLEDE.

Positions 24–106 constitute a Lipoyl-binding domain; that stretch reads TYTVGITEHA…YADGWIFKIK (83 aa). At Lys-65 the chain carries N6-lipoyllysine.

This sequence belongs to the GcvH family. In terms of assembly, the glycine cleavage system is composed of four proteins: P, T, L and H. (R)-lipoate is required as a cofactor.

Functionally, the glycine cleavage system catalyzes the degradation of glycine. The H protein shuttles the methylamine group of glycine from the P protein to the T protein. The protein is Glycine cleavage system H protein of Salmonella arizonae (strain ATCC BAA-731 / CDC346-86 / RSK2980).